A 345-amino-acid chain; its full sequence is Phosphate acyltransferase (345 aa).

This sequence belongs to the PlsX family. Homodimer. Probably interacts with PlsY.

It is found in the cytoplasm. The enzyme catalyses a fatty acyl-[ACP] + phosphate = an acyl phosphate + holo-[ACP]. It participates in lipid metabolism; phospholipid metabolism. Functionally, catalyzes the reversible formation of acyl-phosphate (acyl-PO(4)) from acyl-[acyl-carrier-protein] (acyl-ACP). This enzyme utilizes acyl-ACP as fatty acyl donor, but not acyl-CoA. The sequence is that of Phosphate acyltransferase from Wolbachia sp. subsp. Drosophila simulans (strain wRi).